We begin with the raw amino-acid sequence, 489 residues long: MNPRPVRPGGSLQQSLLALGSLSVAVGLAVWQQRTLGRGRSDSVTAVERPETTFSDVAGLIEAKEELAEIVTFLRDPERFRRMGARMPRGVLLAGPPGTGKTLLARAVAGEAGVPFFAMSASQFVEVYVGVGAKRVRDLFAAARKASPAIVFIDEIDAIGRRRGDSQSHQEYEQTLNQVLVELDGFHPRQAVVVIAATNRSDILDPALLRPGRFDRRVELSLPDRAERAAILRVHAQDKPLAPDVDLDALAARTVGLSGADLENTLNEAALLALRRGGDEITQADLEEAVDRVIAGPSRRSRALSARERETIAVHEAGHALVAHQLASADAPRRVTILGRGQMGGATVLAPDEDRRLWTRGQFLDRLAVLLGGYAAEEYRYGEVTTGSSGDLSQASALAQAMVTTYGMGKSLRGRAFDANGPVSDETSRAIDEEVSALVSEALELASRTIANAAHLLDALVAALLAEETLDEARLAAILGPRPARPAMN.

Topologically, residues 1 to 14 (MNPRPVRPGGSLQQ) are cytoplasmic. Residues 15–31 (SLLALGSLSVAVGLAVW) form a helical membrane-spanning segment. The Extracellular portion of the chain corresponds to 32 to 489 (QQRTLGRGRS…GPRPARPAMN (458 aa)). 95-102 (GPPGTGKT) is an ATP binding site. Zn(2+) is bound at residue histidine 315. Glutamate 316 is a catalytic residue. Residues histidine 319 and aspartate 391 each contribute to the Zn(2+) site.

In the central section; belongs to the AAA ATPase family. This sequence in the C-terminal section; belongs to the peptidase M41 family. As to quaternary structure, homohexamer. Requires Zn(2+) as cofactor.

It localises to the cell membrane. In terms of biological role, acts as a processive, ATP-dependent zinc metallopeptidase for both cytoplasmic and membrane proteins. Plays a role in the quality control of integral membrane proteins. This is ATP-dependent zinc metalloprotease FtsH 3 from Sphaerobacter thermophilus (strain ATCC 49802 / DSM 20745 / KCCM 41009 / NCIMB 13125 / S 6022).